We begin with the raw amino-acid sequence, 192 residues long: Peptidyl-tRNA hydrolase (192 aa).

Residue Y14 participates in tRNA binding. H19 serves as the catalytic Proton acceptor. Residues Y64, N66, and N112 each contribute to the tRNA site.

The protein belongs to the PTH family. Monomer.

The protein localises to the cytoplasm. It carries out the reaction an N-acyl-L-alpha-aminoacyl-tRNA + H2O = an N-acyl-L-amino acid + a tRNA + H(+). Its function is as follows. Hydrolyzes ribosome-free peptidyl-tRNAs (with 1 or more amino acids incorporated), which drop off the ribosome during protein synthesis, or as a result of ribosome stalling. Catalyzes the release of premature peptidyl moieties from peptidyl-tRNA molecules trapped in stalled 50S ribosomal subunits, and thus maintains levels of free tRNAs and 50S ribosomes. In Anaeromyxobacter sp. (strain K), this protein is Peptidyl-tRNA hydrolase.